Reading from the N-terminus, the 192-residue chain is A-type ATP synthase subunit E (192 aa).

Residues 1–66 form a disordered region; it reads MSLDTVVEDI…QERDQKLSSA (66 aa). The span at 8–26 shows a compositional bias: basic and acidic residues; it reads EDIRDEARARADEIRSEGE. Residues 27–49 are compositionally biased toward acidic residues; sequence ERAEEIIDEAEREADDIVDEAER. A compositionally biased stretch (basic and acidic residues) spans 50–66; that stretch reads EAERKISQERDQKLSSA.

Belongs to the V-ATPase E subunit family. In terms of assembly, has multiple subunits with at least A(3), B(3), C, D, E, F, H, I and proteolipid K(x).

The protein resides in the cell membrane. Component of the A-type ATP synthase that produces ATP from ADP in the presence of a proton gradient across the membrane. In Natronomonas pharaonis (strain ATCC 35678 / DSM 2160 / CIP 103997 / JCM 8858 / NBRC 14720 / NCIMB 2260 / Gabara) (Halobacterium pharaonis), this protein is A-type ATP synthase subunit E.